We begin with the raw amino-acid sequence, 520 residues long: GMP synthase [glutamine-hydrolyzing] (520 aa).

The Glutamine amidotransferase type-1 domain occupies 12 to 205; the sequence is KIIVLDYGSQ…AISICGARGD (194 aa). The Nucleophile role is filled by cysteine 89. Catalysis depends on residues histidine 179 and glutamate 181. The 190-residue stretch at 206–395 folds into the GMPS ATP-PPase domain; it reads WSMDNFIDME…LGMPDEVVWR (190 aa). Residue 233 to 239 participates in ATP binding; that stretch reads SGGVDSS.

Homodimer.

It catalyses the reaction XMP + L-glutamine + ATP + H2O = GMP + L-glutamate + AMP + diphosphate + 2 H(+). The protein operates within purine metabolism; GMP biosynthesis; GMP from XMP (L-Gln route): step 1/1. Catalyzes the synthesis of GMP from XMP. The protein is GMP synthase [glutamine-hydrolyzing] of Streptococcus equi subsp. zooepidemicus (strain H70).